A 170-amino-acid chain; its full sequence is MKEAYLYIVEKSVAWEFDSPEYGRLARKVVELLYDRKEDLTDDRVAILLNISTAETRRILQYLMKLGLVGVKKRTTEDYRIEYTWYVDDDVIRQAIKNRAKVAKEKISSLIKSLTEGAYYVCPTCHMRYTLDQAVNYGGVCPVCGTQLEYVENVEEIDKLTKAYESIDKI.

One can recognise an HTH TFE/IIEalpha-type domain in the interval 1-93 (MKEAYLYIVE…TWYVDDDVIR (93 aa)).

It belongs to the TFE family. Monomer. Interaction with RNA polymerase subunits RpoF and RpoE is necessary for Tfe stimulatory transcription activity. Able to interact with Tbp and RNA polymerase in the absence of DNA promoter. Interacts both with the preinitiation and elongation complexes.

Transcription factor that plays a role in the activation of archaeal genes transcribed by RNA polymerase. Facilitates transcription initiation by enhancing TATA-box recognition by TATA-box-binding protein (Tbp), and transcription factor B (Tfb) and RNA polymerase recruitment. Not absolutely required for transcription in vitro, but particularly important in cases where Tbp or Tfb function is not optimal. It dynamically alters the nucleic acid-binding properties of RNA polymerases by stabilizing the initiation complex and destabilizing elongation complexes. Seems to translocate with the RNA polymerase following initiation and acts by binding to the non template strand of the transcription bubble in elongation complexes. The protein is Transcription factor E of Pyrobaculum neutrophilum (strain DSM 2338 / JCM 9278 / NBRC 100436 / V24Sta) (Thermoproteus neutrophilus).